The following is a 554-amino-acid chain: Valerianol synthase TPS1F (554 aa).

Mg(2+) is bound by residues Asp-307 and Asp-311. Residues 326–330 (VQRWD) carry the DDXXD motif motif. Residues Asp-452, Ser-456, and Glu-460 each coordinate Mg(2+).

It belongs to the terpene synthase family. Mg(2+) is required as a cofactor.

It carries out the reaction (2E,6E)-farnesyl diphosphate + H2O = valerianol + diphosphate. It participates in secondary metabolite biosynthesis; terpenoid biosynthesis. In terms of biological role, terpene synthase that catalyzes the biosynthesis of the terpene valerianol, which is a volatile compound of floral scent. This chain is Valerianol synthase TPS1F, found in Camellia hiemalis (Camellia).